We begin with the raw amino-acid sequence, 294 residues long: Diphthine synthase (294 aa).

Residues D93, V96, 121-122 (SG), L173, and A220 contribute to the S-adenosyl-L-methionine site.

This sequence belongs to the diphthine synthase family. As to quaternary structure, homodimer.

It catalyses the reaction 2-[(3S)-amino-3-carboxypropyl]-L-histidyl-[translation elongation factor 2] + 3 S-adenosyl-L-methionine = diphthine-[translation elongation factor 2] + 3 S-adenosyl-L-homocysteine + 3 H(+). It participates in protein modification; peptidyl-diphthamide biosynthesis. S-adenosyl-L-methionine-dependent methyltransferase that catalyzes the trimethylation of the amino group of the modified target histidine residue in translation elongation factor 2 (EF-2), to form an intermediate called diphthine. The three successive methylation reactions represent the second step of diphthamide biosynthesis. The sequence is that of Diphthine synthase (dphB) from Aeropyrum pernix (strain ATCC 700893 / DSM 11879 / JCM 9820 / NBRC 100138 / K1).